Here is a 253-residue protein sequence, read N- to C-terminus: MVEFRAYQEEARYFKYAFNAAGKVVEEAPLIVTENGIVSRAMDASHIAMAVLEMPWEMFDEYEPPSDELMYGLDMEEVTRIVRRARVTDEITLEGEDEEEVIIKLGSSGYEREFRLRSIDIDDIPDEPELDFAVEVTVVPDFIQDAVRDADLVSDTVKVGAKGNTFYFKAEGERGRVIPKVQEGAEALLTFEVEEDVETAYPLDYLKDMIQAAQGAESVRIRLGQDMPLELTFRIGPAGEGKLTFYLAPRVEE.

The protein belongs to the PCNA family. In terms of assembly, homotrimer. The subunits circularize to form a toroid; DNA passes through its center. Replication factor C (RFC) is required to load the toroid on the DNA.

Its function is as follows. Sliding clamp subunit that acts as a moving platform for DNA processing. Responsible for tethering the catalytic subunit of DNA polymerase and other proteins to DNA during high-speed replication. In Methanopyrus kandleri (strain AV19 / DSM 6324 / JCM 9639 / NBRC 100938), this protein is DNA polymerase sliding clamp.